A 362-amino-acid chain; its full sequence is Glutaminyl-peptide cyclotransferase (362 aa).

An N-terminal signal peptide occupies residues 1–35 (MAGSEDKRVVGTLHLLLLQATVLSLTAGNLSLVSA). Asparagine 29 and asparagine 50 each carry an N-linked (GlcNAc...) asparagine glycan. Cysteine 140 and cysteine 165 are disulfide-bonded. Aspartate 160 is a binding site for Zn(2+). Catalysis depends on glutamate 202, which acts as the Proton acceptor. Position 203 (glutamate 203) interacts with Zn(2+). Aspartate 249 acts as the Proton acceptor in catalysis. Residue histidine 331 coordinates Zn(2+).

Belongs to the glutaminyl-peptide cyclotransferase family.

The protein localises to the secreted. It carries out the reaction N-terminal L-glutaminyl-[peptide] = N-terminal 5-oxo-L-prolyl-[peptide] + NH4(+). Responsible for the biosynthesis of pyroglutamyl peptides. Has a bias against acidic and tryptophan residues adjacent to the N-terminal glutaminyl residue and a lack of importance of chain length after the second residue. This chain is Glutaminyl-peptide cyclotransferase (Qpct), found in Mus musculus (Mouse).